Consider the following 170-residue polypeptide: Thialysine N-epsilon-acetyltransferase (170 aa).

One can recognise an N-acetyltransferase domain in the interval 4 to 166 (TRIREARESD…FRFEGEAMRE (163 aa)). A substrate-binding site is contributed by 27–28 (FE). Position 29 is an N6-acetyllysine (Lys-29). Glu-92 serves as a coordination point for substrate. Residues 94 to 96 (IYV), 102 to 107 (GQGIGT), 133 to 135 (NKK), and Tyr-140 contribute to the acetyl-CoA site. Residue Tyr-140 is the Proton donor of the active site. Glu-152 provides a ligand contact to substrate.

It belongs to the acetyltransferase family. As to quaternary structure, homodimer.

It localises to the cytoplasm. The catalysed reaction is S-(2-aminoethyl)-L-cysteine + acetyl-CoA = S-(2-acetamidoethyl)-L-cysteine + CoA + H(+). It catalyses the reaction an alkane-alpha,omega-diamine + acetyl-CoA = an N-acetylalkane-alpha,omega-diamine + CoA + H(+). Catalyzes the N-acetylation of the amino acid thialysine (S-(2-aminoethyl)-L-cysteine), a L-lysine analog with the 4-methylene group substituted with a sulfur. May also catalyze acetylation of polyamines, such as norspermidine, spermidine or spermine. However, ability to acetylate polyamines is weak, suggesting that it does not act as a diamine acetyltransferase in vivo. In Mus musculus (Mouse), this protein is Thialysine N-epsilon-acetyltransferase.